The following is a 390-amino-acid chain: 2-oxoisovalerate dehydrogenase subunit beta, mitochondrial (390 aa).

The transit peptide at 1-48 (MAAVAARAGGLLWLRAAGAERRRCGLRCAALVQGFLQPGGEDTAQKRR) directs the protein to the mitochondrion. Thiamine diphosphate is bound at residue tyrosine 150. The K(+) site is built by glycine 176, leucine 178, threonine 179, cysteine 226, and aspartate 229. N6-acetyllysine is present on lysine 230. Position 231 (asparagine 231) interacts with K(+). Position 239 is an N6-acetyllysine (lysine 239).

As to quaternary structure, heterotetramer of 2 alpha/BCKDHA and 2 beta chains/BCKDHB that forms the branched-chain alpha-keto acid decarboxylase (E1) component of the BCKD complex. The branched-chain alpha-ketoacid dehydrogenase is a large complex composed of three major building blocks E1, E2 and E3. It is organized around E2, a 24-meric cubic core composed of DBT, to which are associated 6 to 12 copies of E1, and approximately 6 copies of the dehydrogenase E3, a DLD dimer. Requires thiamine diphosphate as cofactor.

It is found in the mitochondrion matrix. It carries out the reaction N(6)-[(R)-lipoyl]-L-lysyl-[protein] + 3-methyl-2-oxobutanoate + H(+) = N(6)-[(R)-S(8)-2-methylpropanoyldihydrolipoyl]-L-lysyl-[protein] + CO2. Functionally, together with BCKDHA forms the heterotetrameric E1 subunit of the mitochondrial branched-chain alpha-ketoacid dehydrogenase (BCKD) complex. The BCKD complex catalyzes the multi-step oxidative decarboxylation of alpha-ketoacids derived from the branched-chain amino-acids valine, leucine and isoleucine producing CO2 and acyl-CoA which is subsequently utilized to produce energy. The E1 subunit catalyzes the first step with the decarboxylation of the alpha-ketoacid forming an enzyme-product intermediate. A reductive acylation mediated by the lipoylamide cofactor of E2 extracts the acyl group from the E1 active site for the next step of the reaction. This chain is 2-oxoisovalerate dehydrogenase subunit beta, mitochondrial, found in Mus musculus (Mouse).